The following is a 223-amino-acid chain: Deoxyribose-phosphate aldolase (223 aa).

The Proton donor/acceptor role is filled by Asp-91. Residue Lys-153 is the Schiff-base intermediate with acetaldehyde of the active site. Catalysis depends on Lys-182, which acts as the Proton donor/acceptor.

It belongs to the DeoC/FbaB aldolase family. DeoC type 1 subfamily.

The protein localises to the cytoplasm. The catalysed reaction is 2-deoxy-D-ribose 5-phosphate = D-glyceraldehyde 3-phosphate + acetaldehyde. Its pathway is carbohydrate degradation; 2-deoxy-D-ribose 1-phosphate degradation; D-glyceraldehyde 3-phosphate and acetaldehyde from 2-deoxy-alpha-D-ribose 1-phosphate: step 2/2. Catalyzes a reversible aldol reaction between acetaldehyde and D-glyceraldehyde 3-phosphate to generate 2-deoxy-D-ribose 5-phosphate. The chain is Deoxyribose-phosphate aldolase from Streptococcus pyogenes serotype M4 (strain MGAS10750).